The following is a 79-amino-acid chain: ESX secretion system protein YukD (79 aa).

It belongs to the EsaB family.

Required for YukE secretion. Probable component or regulator of the ESX/ESAT-6-like secretion system (BsEss). The sequence is that of ESX secretion system protein YukD (yukD) from Bacillus subtilis (strain 168).